We begin with the raw amino-acid sequence, 195 residues long: uncharacterized protein (195 aa).

Positions 6–66 constitute an HTH tetR-type domain; sequence VESRKRLLKA…ELITDFHSRV (61 aa). Residues 29-48 constitute a DNA-binding region (H-T-H motif); sequence KVSEIVKKAGFTQPSFYLYF.

This is an uncharacterized protein from Bacillus subtilis (strain 168).